A 188-amino-acid polypeptide reads, in one-letter code: Elongation factor P-like protein (188 aa).

This sequence belongs to the elongation factor P family.

The sequence is that of Elongation factor P-like protein from Xylella fastidiosa (strain M12).